Here is a 210-residue protein sequence, read N- to C-terminus: Putative RING-H2 finger protein ATL50 (210 aa).

A helical membrane pass occupies residues 35–55 (IVLLYITLLSIIFFVAALIHL). The RING-type; atypical zinc-finger motif lies at 122-164 (CAVCLREFTAEDELRLLPKCSHAFHVECIDTWLLTNSTCPLCR). The segment at 187–210 (SDGDNSQDSDSSFMLTDLDDVESK) is disordered.

This sequence belongs to the RING-type zinc finger family. ATL subfamily.

It is found in the membrane. The catalysed reaction is S-ubiquitinyl-[E2 ubiquitin-conjugating enzyme]-L-cysteine + [acceptor protein]-L-lysine = [E2 ubiquitin-conjugating enzyme]-L-cysteine + N(6)-ubiquitinyl-[acceptor protein]-L-lysine.. It participates in protein modification; protein ubiquitination. This chain is Putative RING-H2 finger protein ATL50 (ATL50), found in Arabidopsis thaliana (Mouse-ear cress).